A 350-amino-acid chain; its full sequence is Protein pelota homolog (350 aa).

Belongs to the eukaryotic release factor 1 family. Pelota subfamily. Monomer. The cofactor is a divalent metal cation.

It localises to the cytoplasm. Functionally, may function in recognizing stalled ribosomes, interact with stem-loop structures in stalled mRNA molecules, and effect endonucleolytic cleavage of the mRNA. May play a role in the release non-functional ribosomes and degradation of damaged mRNAs. Has endoribonuclease activity. In Methanosarcina mazei (strain ATCC BAA-159 / DSM 3647 / Goe1 / Go1 / JCM 11833 / OCM 88) (Methanosarcina frisia), this protein is Protein pelota homolog.